Here is a 239-residue protein sequence, read N- to C-terminus: Protein Thf1 (239 aa).

Residues 183 to 219 (ERVKKDLELYRSNLDRLKQARAIVEEMVKAARRQQER) adopt a coiled-coil conformation. Over residues 211 to 221 (KAARRQQERRQ) the composition is skewed to basic and acidic residues. The segment at 211–239 (KAARRQQERRQSTASLPETPAADRRESSG) is disordered.

It belongs to the THF1 family.

Functionally, may be involved in photosynthetic membrane biogenesis. The polypeptide is Protein Thf1 (Synechococcus sp. (strain JA-3-3Ab) (Cyanobacteria bacterium Yellowstone A-Prime)).